Here is a 205-residue protein sequence, read N- to C-terminus: Peroxynitrite isomerase (205 aa).

The interval M1 to Q23 is disordered. The GXWXGXG motif lies at G52–G58. 3 residues coordinate heme b: T63, K168, and H195.

This sequence belongs to the nitrobindin family. As to quaternary structure, homodimer. It depends on heme b as a cofactor.

The enzyme catalyses peroxynitrite = nitrate. It participates in nitrogen metabolism. Heme-binding protein able to scavenge peroxynitrite and to protect free L-tyrosine against peroxynitrite-mediated nitration, by acting as a peroxynitrite isomerase that converts peroxynitrite to nitrate. Therefore, this protein likely plays a role in peroxynitrite sensing and in the detoxification of reactive nitrogen and oxygen species (RNS and ROS, respectively). Is able to bind nitric oxide (NO) in vitro, but may act as a sensor of peroxynitrite levels in vivo. This is Peroxynitrite isomerase from Mycobacteroides abscessus (strain ATCC 19977 / DSM 44196 / CCUG 20993 / CIP 104536 / JCM 13569 / NCTC 13031 / TMC 1543 / L948) (Mycobacterium abscessus).